The chain runs to 160 residues: Phosphopantetheine adenylyltransferase (160 aa).

T10 serves as a coordination point for substrate. Residues 10 to 11 (TF) and H18 contribute to the ATP site. Substrate contacts are provided by K42, L74, and R88. Residues 89–91 (GLR), E99, and 124–130 (NSFISST) contribute to the ATP site.

This sequence belongs to the bacterial CoaD family. As to quaternary structure, homohexamer. Mg(2+) serves as cofactor.

Its subcellular location is the cytoplasm. It catalyses the reaction (R)-4'-phosphopantetheine + ATP + H(+) = 3'-dephospho-CoA + diphosphate. Its pathway is cofactor biosynthesis; coenzyme A biosynthesis; CoA from (R)-pantothenate: step 4/5. Reversibly transfers an adenylyl group from ATP to 4'-phosphopantetheine, yielding dephospho-CoA (dPCoA) and pyrophosphate. This chain is Phosphopantetheine adenylyltransferase, found in Pseudoalteromonas atlantica (strain T6c / ATCC BAA-1087).